Reading from the N-terminus, the 279-residue chain is Pantothenate synthetase (279 aa).

An ATP-binding site is contributed by 26 to 33; it reads MGNLHEGH. The Proton donor role is filled by His-33. Gln-57 serves as a coordination point for (R)-pantoate. Gln-57 contacts beta-alanine. 144–147 contacts ATP; that stretch reads GKKD. Gln-150 contacts (R)-pantoate. ATP-binding positions include Val-173 and 181–184; that span reads LSSR.

The protein belongs to the pantothenate synthetase family. Homodimer.

Its subcellular location is the cytoplasm. The enzyme catalyses (R)-pantoate + beta-alanine + ATP = (R)-pantothenate + AMP + diphosphate + H(+). The protein operates within cofactor biosynthesis; (R)-pantothenate biosynthesis; (R)-pantothenate from (R)-pantoate and beta-alanine: step 1/1. In terms of biological role, catalyzes the condensation of pantoate with beta-alanine in an ATP-dependent reaction via a pantoyl-adenylate intermediate. In Burkholderia orbicola (strain MC0-3), this protein is Pantothenate synthetase.